The sequence spans 458 residues: tRNA(Ile)-lysidine synthase (458 aa).

36–41 (SGGADS) contributes to the ATP binding site.

The protein belongs to the tRNA(Ile)-lysidine synthase family.

Its subcellular location is the cytoplasm. It carries out the reaction cytidine(34) in tRNA(Ile2) + L-lysine + ATP = lysidine(34) in tRNA(Ile2) + AMP + diphosphate + H(+). Functionally, ligates lysine onto the cytidine present at position 34 of the AUA codon-specific tRNA(Ile) that contains the anticodon CAU, in an ATP-dependent manner. Cytidine is converted to lysidine, thus changing the amino acid specificity of the tRNA from methionine to isoleucine. The polypeptide is tRNA(Ile)-lysidine synthase (Protochlamydia amoebophila (strain UWE25)).